The chain runs to 1801 residues: Sperm flagellar protein 2 (1801 aa).

The Calponin-homology (CH) domain maps to 1–105 (MSEILCQWLN…LLYQLYIALQ (105 aa)). 2 coiled-coil regions span residues 176-260 (EKFE…KDLQ) and 321-395 (AHEA…TKQA). The interval 632 to 659 (QDKNELTDTQVPGEAAPQKEGTKSSDFE) is disordered. 2 coiled-coil regions span residues 722–748 (NQAKLLEEALTGYKRKSLQLKKKKAQM) and 869–895 (ATEVSNKKIKVEKKLEEKETEKKSAVS). 2 stretches are compositionally biased toward basic and acidic residues: residues 883–892 (LEEKETEKKS) and 909–918 (EAEKEKEVHQ). Positions 883 to 949 (LEEKETEKKS…KISVKKSPID (67 aa)) are disordered. A coiled-coil region spans residues 1051 to 1077 (EDLWEDEETKAELHQRVNDLRDRLWDI). Composition is skewed to basic and acidic residues over residues 1233–1250 (RLAEEEKEQPQLDPKEKS) and 1261–1295 (KEKEQAKKEKEQAKKEKEQAKKEKEPPKKKMAEKK). 3 disordered regions span residues 1233–1304 (RLAE…SPVV), 1651–1695 (KTSI…NANT), and 1781–1801 (SEHAQGSDGERSPSRLTDEKK). Residues 1252–1286 (QSGTNKKAKKEKEQAKKEKEQAKKEKEQAKKEKEP) are a coiled coil. The tract at residues 1305–1657 (EVSPVTITPE…TAEKTSISSV (353 aa)) is interaction with IFT20. Residues 1665 to 1695 (EAEENSTREELKEEKDERDQKEEEIPENANT) are a coiled coil. A compositionally biased stretch (basic and acidic residues) spans 1669 to 1687 (NSTREELKEEKDERDQKEE).

In terms of assembly, interacts (via C-terminus) with IFT20. Interacts with DYNC1I2. As to expression, predominantly expressed in ciliated tissues such as lung, trachea, testis, brain, and at lower levels in kidney and spleen.

The protein resides in the cell projection. It is found in the cilium. The protein localises to the flagellum. Its subcellular location is the cytoplasm. It localises to the golgi apparatus. Its function is as follows. Required for correct axoneme development in spermatozoa. Important for normal development of the manchette and sperm head morphology. Essential for male fertility. Plays a role in localization of the intraflagellar transport protein IFT20 to the manchette, suggesting function as an adapter for dynein-mediated protein transport during spermatogenesis. Also plays a role in bone growth where it seems to be required for normal osteoblast differentiation. The chain is Sperm flagellar protein 2 (Spef2) from Rattus norvegicus (Rat).